Here is a 155-residue protein sequence, read N- to C-terminus: Ribosome-binding factor A (155 aa).

Basic and acidic residues-rich tracts occupy residues 116–125 and 142–155; these read ARQRDQEVAR and SPHE…ADGW. Residues 116-155 form a disordered region; the sequence is ARQRDQEVARQAEGATPAGDANPYKTSPHEGRPESEADGW.

It belongs to the RbfA family. In terms of assembly, monomer. Binds 30S ribosomal subunits, but not 50S ribosomal subunits or 70S ribosomes.

The protein resides in the cytoplasm. In terms of biological role, one of several proteins that assist in the late maturation steps of the functional core of the 30S ribosomal subunit. Associates with free 30S ribosomal subunits (but not with 30S subunits that are part of 70S ribosomes or polysomes). Required for efficient processing of 16S rRNA. May interact with the 5'-terminal helix region of 16S rRNA. The chain is Ribosome-binding factor A from Corynebacterium kroppenstedtii (strain DSM 44385 / JCM 11950 / CIP 105744 / CCUG 35717).